The sequence spans 53 residues: Zinc metalloproteinase-disintegrin-like alborhagin (53 aa).

This sequence belongs to the venom metalloproteinase (M12B) family. P-III subfamily. P-IIIb sub-subfamily. As to quaternary structure, monomer. The cofactor is Zn(2+). In terms of processing, contains numerous disulfide bonds. Glycosylated. As to expression, expressed by the venom gland.

The protein localises to the secreted. Its activity is regulated as follows. Alborhagin-induced platelet aggregation, but not shape change, is inhibited by EDTA, suggesting that the platelet activation (shape change) is independent of divalent cation or metalloproteinase activity. In terms of biological role, induces platelet activation and glycoprotein VI (GP6)-dependent platelet aggregation. Induces ectodomain cleavage of GP6 by activating endogenous platelet metalloproteinases (probably ADAM10). Has fibrinogenolytic activity against the alpha chain of fibrinogen (FGA). Recognizes distinct binding sites as convulxin, since alborhagin has minimal effect on convulxin binding to GPVI-expressing cells. Disintegrin alborhagin-C: 42 kDa fragment of alborhagin autoproteolysed that does not show platelet activation. The sequence is that of Zinc metalloproteinase-disintegrin-like alborhagin from Trimeresurus albolabris (White-lipped pit viper).